Reading from the N-terminus, the 354-residue chain is 3-dehydroquinate synthase (354 aa).

Residues 100-104, 124-125, lysine 136, lysine 145, and 163-166 each bind NAD(+); these read GATGD, TT, and FLKT. Zn(2+) contacts are provided by glutamate 178, histidine 242, and histidine 256.

It belongs to the sugar phosphate cyclases superfamily. Dehydroquinate synthase family. NAD(+) is required as a cofactor. It depends on Co(2+) as a cofactor. Requires Zn(2+) as cofactor.

It localises to the cytoplasm. The catalysed reaction is 7-phospho-2-dehydro-3-deoxy-D-arabino-heptonate = 3-dehydroquinate + phosphate. The protein operates within metabolic intermediate biosynthesis; chorismate biosynthesis; chorismate from D-erythrose 4-phosphate and phosphoenolpyruvate: step 2/7. Functionally, catalyzes the conversion of 3-deoxy-D-arabino-heptulosonate 7-phosphate (DAHP) to dehydroquinate (DHQ). The protein is 3-dehydroquinate synthase of Staphylococcus aureus (strain MSSA476).